The primary structure comprises 231 residues: 5'-methylthioadenosine/S-adenosylhomocysteine nucleosidase (231 aa).

Glu-12 (proton acceptor) is an active-site residue. Residues Gly-78, Met-153, and 174–175 (ME) each bind substrate. Asp-198 functions as the Proton donor in the catalytic mechanism.

This sequence belongs to the PNP/UDP phosphorylase family. MtnN subfamily.

The catalysed reaction is S-adenosyl-L-homocysteine + H2O = S-(5-deoxy-D-ribos-5-yl)-L-homocysteine + adenine. It catalyses the reaction S-methyl-5'-thioadenosine + H2O = 5-(methylsulfanyl)-D-ribose + adenine. It carries out the reaction 5'-deoxyadenosine + H2O = 5-deoxy-D-ribose + adenine. Its pathway is amino-acid biosynthesis; L-methionine biosynthesis via salvage pathway; S-methyl-5-thio-alpha-D-ribose 1-phosphate from S-methyl-5'-thioadenosine (hydrolase route): step 1/2. Functionally, catalyzes the irreversible cleavage of the glycosidic bond in both 5'-methylthioadenosine (MTA) and S-adenosylhomocysteine (SAH/AdoHcy) to adenine and the corresponding thioribose, 5'-methylthioribose and S-ribosylhomocysteine, respectively. Also cleaves 5'-deoxyadenosine, a toxic by-product of radical S-adenosylmethionine (SAM) enzymes, into 5-deoxyribose and adenine. The sequence is that of 5'-methylthioadenosine/S-adenosylhomocysteine nucleosidase from Psychromonas ingrahamii (strain DSM 17664 / CCUG 51855 / 37).